We begin with the raw amino-acid sequence, 113 residues long: Endoribonuclease SymE (113 aa).

Positions Ser-29–Pro-74 constitute a SpoVT-AbrB domain.

Belongs to the SymE family.

The protein resides in the cytoplasm. Involved in the degradation and recycling of damaged RNA. It is itself a target for degradation by the ATP-dependent protease Lon. In Escherichia coli O6:K15:H31 (strain 536 / UPEC), this protein is Endoribonuclease SymE.